A 442-amino-acid polypeptide reads, in one-letter code: Protein PRRC1-B (442 aa).

Residues 1–24 form a disordered region; that stretch reads MMEESGIETTPPSTPPPSTIGTSV.

The protein belongs to the PRRC1 family.

The protein resides in the golgi apparatus. The chain is Protein PRRC1-B (prrc1-b) from Xenopus laevis (African clawed frog).